A 69-amino-acid polypeptide reads, in one-letter code: MELESRMDDLECRQAFQDDTLQALNEVVVEQQRSIERLQLQVAALIKRLEDVQGLVGGVEEDEAPPPHY.

Belongs to the SlyX family.

The chain is Protein SlyX homolog from Pseudomonas paraeruginosa (strain DSM 24068 / PA7) (Pseudomonas aeruginosa (strain PA7)).